The sequence spans 467 residues: Ribosomal protein uS12 methylthiotransferase RimO (467 aa).

An MTTase N-terminal domain is found at 1–110; sequence MDLHGCAKNQ…LPQLIDSMFP (110 aa). [4Fe-4S] cluster-binding residues include Cys6, Cys42, Cys73, Cys153, Cys157, and Cys160. In terms of domain architecture, Radical SAM core spans 139-386; sequence LNFPRSTYIK…QNAQTSITEK (248 aa). A TRAM domain is found at 389 to 467; sequence DSFIGKEIEV…NGFDLEAVAV (79 aa).

Belongs to the methylthiotransferase family. RimO subfamily. It depends on [4Fe-4S] cluster as a cofactor.

The protein resides in the cytoplasm. The catalysed reaction is L-aspartate(89)-[ribosomal protein uS12]-hydrogen + (sulfur carrier)-SH + AH2 + 2 S-adenosyl-L-methionine = 3-methylsulfanyl-L-aspartate(89)-[ribosomal protein uS12]-hydrogen + (sulfur carrier)-H + 5'-deoxyadenosine + L-methionine + A + S-adenosyl-L-homocysteine + 2 H(+). In terms of biological role, catalyzes the methylthiolation of an aspartic acid residue of ribosomal protein uS12. This chain is Ribosomal protein uS12 methylthiotransferase RimO, found in Treponema denticola (strain ATCC 35405 / DSM 14222 / CIP 103919 / JCM 8153 / KCTC 15104).